The chain runs to 1058 residues: Protein argonaute MEL1 (1058 aa).

Gly residues-rich tracts occupy residues 1–12 (MAYRGGGRGGRG) and 24–37 (DVPG…GGGA). Disordered regions lie at residues 1-77 (MAYR…YGAP) and 115-147 (RAPP…PSAT). Positions 48-70 (WPPPGMTPRPGPPQPQYPRPGPP) are enriched in pro residues. Residues 121 to 147 (HSSAPAPYQPAAAAPAPSSSSTAPSAT) show a composition bias toward low complexity. A PAZ domain is found at 407-520 (TVIQFVEEFL…LPMEVCKIVE (114 aa)). In terms of domain architecture, Piwi spans 696 to 1016 (LLIVILPEVS…AAFRARYYVE (321 aa)).

The protein belongs to the argonaute family. Ago subfamily.

It is found in the nucleus. Its subcellular location is the nucleolus. In terms of biological role, essential for the progression of premeiotic mitosis and meiosis during sporogenesis. Regulates the cell division of premeiotic germ cells, the proper modification of meiotic chromosomes, and the faithful progression of meiosis, probably via small RNA-mediated gene silencing. May be involved in histone H3 'Lys-9' demethylation in the pericentromeric region. The protein is Protein argonaute MEL1 (MEL1) of Oryza sativa subsp. japonica (Rice).